Here is a 506-residue protein sequence, read N- to C-terminus: BTB/POZ domain and ankyrin repeat-containing protein NPR5 (506 aa).

The region spanning 23–131 (SDVTFSVEGR…LYSGQVSLVP (109 aa)) is the BTB domain. The C2HC NPR-type zinc finger occupies 137-151 (RPGCGERGCWHTHCA). Zn(2+) is bound by residues cysteine 140, cysteine 145, histidine 147, and cysteine 150. ANK repeat units follow at residues 278–306 (HKIR…GLNL), 307–337 (DDAL…DVNH), 342–371 (AGKT…DPNV), and 375–409 (DGVT…KLRL). A disordered region spans residues 481–506 (KMNDGGDGDDGGSRGPSSLFSPHGFP).

It belongs to the plant 'ANKYRIN-BTB/POZ' family. 'NOOT-BOP-COCH-like' (NBCL) subfamily. In terms of assembly, homodimer. Interacts with TGAL5, TGAL7, TGAL8 and TGAL11.

The protein localises to the nucleus. Its subcellular location is the cytoplasm. Its pathway is protein modification; protein ubiquitination. May act as a substrate-specific adapter of an E3 ubiquitin-protein ligase complex (CUL3-RBX1-BTB) which mediates the ubiquitination and subsequent proteasomal degradation of target proteins. Transcriptional co-regulator involved in the promotion of leaf and floral meristem fate and determinacy. Required for the abscission of senescent organs, probably by regulating the cell wall disorganization in abscission zones (AZs, e.g. pulvini at the base of leaves). Maybe involved in defense response against pathogens. The polypeptide is BTB/POZ domain and ankyrin repeat-containing protein NPR5 (Oryza sativa subsp. japonica (Rice)).